Reading from the N-terminus, the 757-residue chain is RNA-directed RNA polymerase catalytic subunit (757 aa).

The tract at residues 50–82 is disordered; sequence SEKGKWTTNTETGAPQLNPIDGPLPEDNEPSGY. A compositionally biased stretch (polar residues) spans 55–64; sequence WTTNTETGAP. 2 consecutive short sequence motifs (nuclear localization signal) follow at residues 187–195 and 203–216; these read RKRRVRDNM and RTIG…NKRS. The tract at residues 249–256 is promoter-binding site; sequence RGFVYFVE. The 198-residue stretch at 286–483 folds into the RdRp catalytic domain; the sequence is VRKMMTNSQD…GINMSKKKSY (198 aa).

It belongs to the influenza viruses polymerase PB1 family. As to quaternary structure, influenza RNA polymerase is composed of three subunits: PB1, PB2 and PA. Interacts (via N-terminus) with PA (via C-terminus). Interacts (via C-terminus) with PB2 (via N-terminus); this interaction is essential for transcription initiation. In terms of processing, phosphorylated by host PRKCA.

It localises to the host nucleus. Its subcellular location is the host cytoplasm. It catalyses the reaction RNA(n) + a ribonucleoside 5'-triphosphate = RNA(n+1) + diphosphate. Functionally, RNA-dependent RNA polymerase which is responsible for replication and transcription of virus RNA segments. The transcription of viral mRNAs occurs by a unique mechanism called cap-snatching. 5' methylated caps of cellular mRNAs are cleaved after 10-13 nucleotides by PA. In turn, these short capped RNAs are used as primers by PB1 for transcription of viral mRNAs. During virus replication, PB1 initiates RNA synthesis and copy vRNA into complementary RNA (cRNA) which in turn serves as a template for the production of more vRNAs. The sequence is that of RNA-directed RNA polymerase catalytic subunit from Influenza A virus (strain A/Memphis/101/1972 H3N2).